Here is a 205-residue protein sequence, read N- to C-terminus: Glycerol-3-phosphate acyltransferase (205 aa).

5 helical membrane-spanning segments follow: residues 4–24 (IAPG…AILV), 80–100 (PFWL…PVFF), 107–127 (GVAT…GVMA), 130–150 (WLLT…SALI), and 155–175 (VWWF…LILL).

This sequence belongs to the PlsY family. In terms of assembly, probably interacts with PlsX.

Its subcellular location is the cell inner membrane. The enzyme catalyses an acyl phosphate + sn-glycerol 3-phosphate = a 1-acyl-sn-glycero-3-phosphate + phosphate. The protein operates within lipid metabolism; phospholipid metabolism. In terms of biological role, catalyzes the transfer of an acyl group from acyl-phosphate (acyl-PO(4)) to glycerol-3-phosphate (G3P) to form lysophosphatidic acid (LPA). This enzyme utilizes acyl-phosphate as fatty acyl donor, but not acyl-CoA or acyl-ACP. This Klebsiella pneumoniae subsp. pneumoniae (strain ATCC 700721 / MGH 78578) protein is Glycerol-3-phosphate acyltransferase.